Here is a 399-residue protein sequence, read N- to C-terminus: Putative endoplasmin-like protein (399 aa).

Residue Lys130 forms a Glycyl lysine isopeptide (Lys-Gly) (interchain with G-Cter in SUMO2) linkage. Positions 350 to 399 (LDLAVVEEPDEEPEETAEDKEQDKDKEMDVGTDEEKQETAKESTAEKDEL) are disordered. Residues 354–367 (VVEEPDEEPEETAE) show a composition bias toward acidic residues. Over residues 368-399 (DKEQDKDKEMDVGTDEEKQETAKESTAEKDEL) the composition is skewed to basic and acidic residues.

The protein belongs to the heat shock protein 90 family.

In terms of biological role, putative molecular chaperone. The protein is Putative endoplasmin-like protein (HSP90B2P) of Homo sapiens (Human).